The chain runs to 58 residues: ATP synthase F(0) complex subunit k, mitochondrial (58 aa).

An N6-acetyllysine mark is found at Lys16 and Lys17. A helical transmembrane segment spans residues 23–45 (TLTGRMNCVLATYGSIALIVLYF).

As to quaternary structure, component of the ATP synthase complex composed at least of ATP5F1A/subunit alpha, ATP5F1B/subunit beta, ATP5MC1/subunit c (homooctomer), MT-ATP6/subunit a, MT-ATP8/subunit 8, ATP5ME/subunit e, ATP5MF/subunit f, ATP5MG/subunit g, ATP5MK/subunit k, ATP5MJ/subunit j, ATP5F1C/subunit gamma, ATP5F1D/subunit delta, ATP5F1E/subunit epsilon, ATP5PF/subunit F6, ATP5PB/subunit b, ATP5PD/subunit d, ATP5PO/subunit OSCP. ATP synthase complex consists of a soluble F(1) head domain (subunits alpha(3) and beta(3)) - the catalytic core - and a membrane F(0) domain - the membrane proton channel (subunits c, a, 8, e, f, g, k and j). These two domains are linked by a central stalk (subunits gamma, delta, and epsilon) rotating inside the F1 region and a stationary peripheral stalk (subunits F6, b, d, and OSCP). The ATP synthase complex/complex V exists as a monomeric and a dimeric supercomplex that helps shape mitochondrial cristae to optimize proton flow.

Its subcellular location is the mitochondrion membrane. Its function is as follows. Subunit k, of the mitochondrial membrane ATP synthase complex (F(1)F(0) ATP synthase or Complex V) that produces ATP from ADP in the presence of a proton gradient across the membrane which is generated by electron transport complexes of the respiratory chain. ATP synthase complex consist of a soluble F(1) head domain - the catalytic core - and a membrane F(1) domain - the membrane proton channel. These two domains are linked by a central stalk rotating inside the F(1) region and a stationary peripheral stalk. During catalysis, ATP synthesis in the catalytic domain of F(1) is coupled via a rotary mechanism of the central stalk subunits to proton translocation. In vivo, can only synthesize ATP although its ATP hydrolase activity can be activated artificially in vitro. Part of the complex F(0) domain. Required for dimerization of the ATP synthase complex and as such regulates ATP synthesis in the mitochondria. This is ATP synthase F(0) complex subunit k, mitochondrial from Homo sapiens (Human).